Here is a 538-residue protein sequence, read N- to C-terminus: Syncytin-2 (538 aa).

The first 15 residues, 1-15 (MGLLLLVLILTPLLA), serve as a signal peptide directing secretion. Residues 31–478 (LLQSTGSPYS…GWLNWEGTWK (448 aa)) lie on the Extracellular side of the membrane. The CXXC motif lies at 43–46 (CWLC). Disulfide bonds link Cys43–Cys46, Cys43–Cys439, and Cys431–Cys438. Residues Asn133, Asn146, Asn177, Asn220, Asn241, Asn247, Asn312, and Asn332 are each glycosylated (N-linked (GlcNAc...) asparagine). The tract at residues 354–374 (FIPLLAGLGILAGTGTGIAGI) is fusion peptide. Residues 414 to 430 (LQNRRGLDMLTAAQGGI) carry the CKS-17 motif. Positions 431 to 439 (CLALDEKCC) match the CX6CC motif. Asn443 carries N-linked (GlcNAc...) asparagine glycosylation. The helical transmembrane segment at 479 to 499 (WFSWVLPFIGPFVSLLLLLLF) threads the bilayer. The Cytoplasmic portion of the chain corresponds to 500–538 (GPCLLNLITQFVSSRLQAIKLQTNLSAGRRPRTIQESPF).

Belongs to the gamma type-C retroviral envelope protein family. HERV class-I FRD env subfamily. The surface and transmembrane proteins form a heterodimer. They are attached by non-covalent interactions or by a labile interchain disulfide bond. In terms of processing, specific enzymatic cleavages in vivo yield the mature SU and TM proteins. Post-translationally, the CXXC motif is highly conserved across a broad range of retroviral envelope proteins. It is thought to participate in the formation of a labile disulfide bond possibly with the CX6CC motif present in the transmembrane protein.

It localises to the cell membrane. Functionally, this endogenous retroviral envelope protein has retained its original fusogenic properties and participates in trophoblast fusion and the formation of a syncytium during placenta morphogenesis. The interaction with MFSD2A is apparently important for this process. In terms of biological role, endogenous envelope proteins may have kept, lost or modified their original function during evolution and this one is unable to confer infectivity. This Hylobates moloch (Silvery gibbon) protein is Syncytin-2 (ERVFRD-1).